Reading from the N-terminus, the 195-residue chain is ALK and LTK ligand 2b (195 aa).

Intrachain disulfides connect cysteine 156–cysteine 192 and cysteine 170–cysteine 179.

It belongs to the ALKAL family. In terms of assembly, homodimer. Highly expressed in the swim bladder and single cells of unknown identity in the head.

The protein localises to the secreted. It localises to the cell membrane. Functionally, cytokine that acts as a physiological ligand for receptor tyrosine kinases LTK and ALK. Required for neural crest cell differentiation and iridophore development during embryonic iridophore development and adult stripe development by acting as a receptor for LTK. Also required for iridophore formation in the adult eye. In Danio rerio (Zebrafish), this protein is ALK and LTK ligand 2b.